A 314-amino-acid chain; its full sequence is Small ribosomal subunit protein uS2c (314 aa).

The protein belongs to the universal ribosomal protein uS2 family.

The protein localises to the plastid. It localises to the chloroplast. The sequence is that of Small ribosomal subunit protein uS2c (rps2) from Stigeoclonium helveticum (Green alga).